Consider the following 867-residue polypeptide: Bifunctional cis-abienol synthase, chloroplastic (867 aa).

The transit peptide at Met-1–Ala-49 directs the protein to the chloroplast. Lys-270 contributes to the substrate binding site. A DXDD motif motif is present at residues Asp-403 to Asp-406. Residue Lys-490 participates in substrate binding. Asp-622, Asp-626, Asn-763, Asp-764, Thr-767, and Glu-771 together coordinate Mg(2+). Positions Asp-622 to Asp-626 match the DDXXD motif motif.

This sequence belongs to the terpene synthase family. Tpsd subfamily. Requires Mg(2+) as cofactor.

It is found in the plastid. Its subcellular location is the chloroplast. The enzyme catalyses 8-hydroxycopalyl diphosphate = cis-abienol + diphosphate. It catalyses the reaction (2E,6E,10E)-geranylgeranyl diphosphate + H2O = 8-hydroxycopalyl diphosphate. The protein operates within terpene metabolism; oleoresin biosynthesis. Functionally, involved in the biosynthesis of cis-abienol, a labdane diterpene that can be used as synthesis precursor of ambergris substitution fragance products. Bifunctional class I/II enzyme in which both the bicyclization and water capture occur in the class II active site, resulting in an intermediary labda-13-en-8-ol diphosphate, which undergoes cleavage of the diphosphate group and final deprotonation at the class I active site. No activity with copalyl diphosphate as substrate. This is Bifunctional cis-abienol synthase, chloroplastic (CAS) from Abies balsamea (Balsam fir).